The primary structure comprises 307 residues: N-acetylmuramic acid 6-phosphate etherase (307 aa).

Residues 59–222 enclose the SIS domain; it reads TTKALSQGGK…STGVMVRLGK (164 aa). Catalysis depends on Glu87, which acts as the Proton donor. Residue Glu118 is part of the active site.

Belongs to the GCKR-like family. MurNAc-6-P etherase subfamily. In terms of assembly, homodimer.

It carries out the reaction N-acetyl-D-muramate 6-phosphate + H2O = N-acetyl-D-glucosamine 6-phosphate + (R)-lactate. It functions in the pathway amino-sugar metabolism; N-acetylmuramate degradation. Its function is as follows. Specifically catalyzes the cleavage of the D-lactyl ether substituent of MurNAc 6-phosphate, producing GlcNAc 6-phosphate and D-lactate. This Trichodesmium erythraeum (strain IMS101) protein is N-acetylmuramic acid 6-phosphate etherase.